Reading from the N-terminus, the 167-residue chain is UPF0262 protein Nwi_0248 (167 aa).

The protein belongs to the UPF0262 family.

This chain is UPF0262 protein Nwi_0248, found in Nitrobacter winogradskyi (strain ATCC 25391 / DSM 10237 / CIP 104748 / NCIMB 11846 / Nb-255).